Here is a 2568-residue protein sequence, read N- to C-terminus: Highly reducing polyketide synthase resH (2568 aa).

In terms of domain architecture, Ketosynthase family 3 (KS3) spans 9–437 (PEPIAIVGMA…GANAHAILDA (429 aa)). Active-site for beta-ketoacyl synthase activity residues include C184, H319, and H359. The 329-residue stretch at 549 to 877 (FIFTGQGAQW…KLAGSLFLSG (329 aa)) folds into the Malonyl-CoA:ACP transacylase (MAT) domain. The interval 942 to 1081 (HDLLGSRLPG…TNDQLLWPDD (140 aa)) is N-terminal hotdog fold. One can recognise a PKS/mFAS DH domain in the interval 942-1244 (HDLLGSRLPG…FSSLETASSD (303 aa)). Residue H974 is the Proton acceptor; for dehydratase activity of the active site. Residues 1091 to 1244 (NKDSYDRRWY…FSSLETASSD (154 aa)) form a C-terminal hotdog fold region. D1156 functions as the Proton donor; for dehydratase activity in the catalytic mechanism. The segment at 1295 to 1595 (VTRLAIRSSA…SGADVVLDDY (301 aa)) is methyltransferase (CMet) domain. Residues 1853 to 2154 (GRLDSFYFKE…QEDSVGLAVL (302 aa)) form the Enoyl reductase (ER) domain. The Ketoreductase (KR) domain occupies 2177–2357 (ASYLLIGCLG…QATSIALGMI (181 aa)). A Carrier domain is found at 2485–2563 (AVKSAILGLI…GLADQVVSLA (79 aa)). S2522 bears the O-(pantetheine 4'-phosphoryl)serine mark.

Pantetheine 4'-phosphate is required as a cofactor.

It functions in the pathway antifungal biosynthesis. Its function is as follows. Highly reducing polyketide synthase; part of the gene cluster that mediates the biosynthesis of the tetrahydropyranyl antifungal agent restricticin that acts as an inhibitor of CYP51 and blocks the ergosterol biosynthesis. The highly reducing polyketide synthase resH, the short chain dehydrogenase resG, the cyclase resF, the FAD-dependent monooxygenase resA and the enoylreductase resD are required to generate the first stable intermediate desmethylrestrictinol. ResH with resD biosynthesize the first polyketide chain intermediate that is reduced by resG, followed by epoxidation by resA before 6-endo cyclization via epoxide opening by resF leads to desmethylrestrictinol. The methyltransferase resE then catalyzes the C4 O-methylation of desmethylrestrictinol to produce restrictinol, and the nonribosomal peptide synthetase resC catalyzes the C3 esterification of restrictinol with glycine that leads to restricticin. This chain is Highly reducing polyketide synthase resH, found in Aspergillus sclerotiorum.